We begin with the raw amino-acid sequence, 946 residues long: Inter-alpha-trypsin inhibitor heavy chain H2 (946 aa).

The first 18 residues, 1 to 18 (MQRLACVLIWLFLLEEQA), serve as a signal peptide directing secretion. Residues 19-54 (FEIPANEYSEFAGYSNLVELAPDKFPFVQENRRYQR) constitute a propeptide that is removed on maturation. Residues 56–185 (LPEESGEMTD…KVQFELHYQE (130 aa)) form the VIT domain. At Ser60 the chain carries Phosphoserine. Residues Asn118 and Asn263 are each glycosylated (N-linked (GlcNAc...) asparagine). 4-carboxyglutamate is present on residues Glu282 and Glu283. The region spanning 308–468 (PKNILFVIDV…YDFLKRLSNE (161 aa)) is the VWFA domain. Asn445 carries an N-linked (GlcNAc...) asparagine glycan. Residue Ser466 is modified to Phosphoserine. The N-linked (GlcNAc...) asparagine glycan is linked to Asn578. Asp702 carries the post-translational modification Aspartate 1-(chondroitin 4-sulfate)-ester. The propeptide occupies 703 to 946 (PHFIIYLPKS…PQLYSFLKRP (244 aa)). Phosphoserine is present on Ser886.

It belongs to the ITIH family. In terms of assembly, I-alpha-I plasma protease inhibitors are assembled from one or two heavy chains (HC) and one light chain, bikunin. Inter-alpha-inhibitor (I-alpha-I) is composed of ITIH1/HC1, ITIH2/HC2 and bikunin. Heavy chains are linked to bikunin via chondroitin 4-sulfate esterified to the alpha-carboxyl of the C-terminal aspartate after propeptide cleavage. In terms of processing, phosphorylated by FAM20C in the extracellular medium.

The protein localises to the secreted. Its function is as follows. May act as a carrier of hyaluronan in serum or as a binding protein between hyaluronan and other matrix protein, including those on cell surfaces in tissues to regulate the localization, synthesis and degradation of hyaluronan which are essential to cells undergoing biological processes. The sequence is that of Inter-alpha-trypsin inhibitor heavy chain H2 (ITIH2) from Mesocricetus auratus (Golden hamster).